We begin with the raw amino-acid sequence, 461 residues long: Fumarate hydratase class II (461 aa).

Residues 98–100 (SGT), 129–132 (HPND), 139–141 (SSN), and Thr-187 contribute to the substrate site. A disordered region spans residues 120-140 (SKKGGKSPVHPNDHVNKGQSS). The active-site Proton donor/acceptor is the His-188. Ser-318 is an active-site residue. Residues Ser-319 and 324–326 (KVN) contribute to the substrate site.

Belongs to the class-II fumarase/aspartase family. Fumarase subfamily. As to quaternary structure, homotetramer.

It is found in the cytoplasm. It carries out the reaction (S)-malate = fumarate + H2O. Its pathway is carbohydrate metabolism; tricarboxylic acid cycle; (S)-malate from fumarate: step 1/1. Involved in the TCA cycle. Catalyzes the stereospecific interconversion of fumarate to L-malate. This is Fumarate hydratase class II from Rickettsia felis (strain ATCC VR-1525 / URRWXCal2) (Rickettsia azadi).